Reading from the N-terminus, the 229-residue chain is Ribosomal RNA small subunit methyltransferase G (229 aa).

S-adenosyl-L-methionine is bound by residues G87, L92, 138–139 (VE), and R154.

The protein belongs to the methyltransferase superfamily. RNA methyltransferase RsmG family.

The protein resides in the cytoplasm. It carries out the reaction guanosine(527) in 16S rRNA + S-adenosyl-L-methionine = N(7)-methylguanosine(527) in 16S rRNA + S-adenosyl-L-homocysteine. In terms of biological role, specifically methylates the N7 position of guanine in position 527 of 16S rRNA. This Oleidesulfovibrio alaskensis (strain ATCC BAA-1058 / DSM 17464 / G20) (Desulfovibrio alaskensis) protein is Ribosomal RNA small subunit methyltransferase G.